The primary structure comprises 372 residues: Queuine tRNA-ribosyltransferase (372 aa).

Aspartate 89 acts as the Proton acceptor in catalysis. Residues 89 to 93 (DSGGF), aspartate 161, and glycine 232 each bind substrate. The tract at residues 262–268 (GIGDLPS) is RNA binding. The active-site Nucleophile is aspartate 281. Positions 286-290 (TKAAR) are RNA binding; important for wobble base 34 recognition. Positions 319, 321, 324, and 351 each coordinate Zn(2+).

It belongs to the queuine tRNA-ribosyltransferase family. Homodimer. Within each dimer, one monomer is responsible for RNA recognition and catalysis, while the other monomer binds to the replacement base PreQ1. Zn(2+) serves as cofactor.

The enzyme catalyses 7-aminomethyl-7-carbaguanine + guanosine(34) in tRNA = 7-aminomethyl-7-carbaguanosine(34) in tRNA + guanine. The protein operates within tRNA modification; tRNA-queuosine biosynthesis. In terms of biological role, catalyzes the base-exchange of a guanine (G) residue with the queuine precursor 7-aminomethyl-7-deazaguanine (PreQ1) at position 34 (anticodon wobble position) in tRNAs with GU(N) anticodons (tRNA-Asp, -Asn, -His and -Tyr). Catalysis occurs through a double-displacement mechanism. The nucleophile active site attacks the C1' of nucleotide 34 to detach the guanine base from the RNA, forming a covalent enzyme-RNA intermediate. The proton acceptor active site deprotonates the incoming PreQ1, allowing a nucleophilic attack on the C1' of the ribose to form the product. After dissociation, two additional enzymatic reactions on the tRNA convert PreQ1 to queuine (Q), resulting in the hypermodified nucleoside queuosine (7-(((4,5-cis-dihydroxy-2-cyclopenten-1-yl)amino)methyl)-7-deazaguanosine). The sequence is that of Queuine tRNA-ribosyltransferase from Chlamydia pneumoniae (Chlamydophila pneumoniae).